Reading from the N-terminus, the 357-residue chain is MHAPEARLAQVIDRFDQVEARLGAAGDADEIVKLSKEHAELKPVAEKANALKSARAELAELAEMMEGDDAEMAEMAREEFYALKERLPELEHAMSLMLLPKDKDDSANAMIEIRAGTGGDEAAIFAGNLYGMYQRYAQLQGWSWELVSASEGEHGGYKEVVAAISGNGVFGRLKFESGVHRVQRVPATESQGRIHTSAATVAIMPQPEDIDIELDMGDVRVDTMRASGAGGQHVNKTDSAVRMTHIPTGLVVVCQEKSQHQNRARAQEILKAKLYDMQREAANAERAAERKGQIGSGDRSERIRTYNYPQGRVSDHRINLTLYKLDDIVAGDGLDEVVAALIAEDQAARLAALEDDA.

Residue glutamine 232 is modified to N5-methylglutamine. Residues 284-304 (AERAAERKGQIGSGDRSERIR) show a composition bias toward basic and acidic residues. A disordered region spans residues 284–308 (AERAAERKGQIGSGDRSERIRTYNY).

Belongs to the prokaryotic/mitochondrial release factor family. In terms of processing, methylated by PrmC. Methylation increases the termination efficiency of RF1.

The protein resides in the cytoplasm. Its function is as follows. Peptide chain release factor 1 directs the termination of translation in response to the peptide chain termination codons UAG and UAA. This chain is Peptide chain release factor 1, found in Maricaulis maris (strain MCS10) (Caulobacter maris).